A 281-amino-acid polypeptide reads, in one-letter code: Transmembrane protein 41A-A (281 aa).

The first 22 residues, 1–22, serve as a signal peptide directing secretion; it reads MRSLVGLVAVIVTATFYLYSLS. The interval 32–56 is disordered; that stretch reads HKQSHEGETTDAKDGDEPSEMETAS. Residues 34-47 are compositionally biased toward basic and acidic residues; sequence QSHEGETTDAKDGD. A run of 5 helical transmembrane segments spans residues 84-104, 107-127, 170-190, 197-217, and 236-256; these read GYVL…AIPG, FLNI…LTCV, LFFF…FLNM, IPVT…NFIC, and WSVV…GALI.

The protein belongs to the TMEM41 family.

Its subcellular location is the membrane. The chain is Transmembrane protein 41A-A (tmem41aa) from Danio rerio (Zebrafish).